The sequence spans 122 residues: Iron-sulfur cluster insertion protein ErpA (122 aa).

3 residues coordinate iron-sulfur cluster: cysteine 50, cysteine 114, and cysteine 116.

Belongs to the HesB/IscA family. Homodimer. The cofactor is iron-sulfur cluster.

Its function is as follows. Required for insertion of 4Fe-4S clusters for at least IspG. This Alkalilimnicola ehrlichii (strain ATCC BAA-1101 / DSM 17681 / MLHE-1) protein is Iron-sulfur cluster insertion protein ErpA.